A 388-amino-acid polypeptide reads, in one-letter code: Succinyl-diaminopimelate desuccinylase (388 aa).

His-71 is a binding site for Zn(2+). Residue Asp-73 is part of the active site. Asp-104 provides a ligand contact to Zn(2+). Glu-143 functions as the Proton acceptor in the catalytic mechanism. Glu-144, Glu-172, and His-361 together coordinate Zn(2+).

Belongs to the peptidase M20A family. DapE subfamily. As to quaternary structure, homodimer. Zn(2+) serves as cofactor. It depends on Co(2+) as a cofactor.

It catalyses the reaction N-succinyl-(2S,6S)-2,6-diaminopimelate + H2O = (2S,6S)-2,6-diaminopimelate + succinate. The protein operates within amino-acid biosynthesis; L-lysine biosynthesis via DAP pathway; LL-2,6-diaminopimelate from (S)-tetrahydrodipicolinate (succinylase route): step 3/3. Functionally, catalyzes the hydrolysis of N-succinyl-L,L-diaminopimelic acid (SDAP), forming succinate and LL-2,6-diaminopimelate (DAP), an intermediate involved in the bacterial biosynthesis of lysine and meso-diaminopimelic acid, an essential component of bacterial cell walls. The chain is Succinyl-diaminopimelate desuccinylase from Bradyrhizobium diazoefficiens (strain JCM 10833 / BCRC 13528 / IAM 13628 / NBRC 14792 / USDA 110).